Reading from the N-terminus, the 619-residue chain is Kinesin light chain 4 (619 aa).

Ser-2 carries the N-acetylserine modification. Residues 32 to 150 adopt a coiled-coil conformation; it reads GLESLHSEHQ…EEEKKHLEFL (119 aa). The stretch at 55-88 is one TPR 1 repeat; sequence QQGGHEEGLVHEKARQLRRSMENIELGLSEAQVM. Positions 156-175 are enriched in basic and acidic residues; that stretch reads YDEDGHSMEEKEGDASKDSL. The tract at residues 156 to 200 is disordered; the sequence is YDEDGHSMEEKEGDASKDSLDDLFPNEEEEDSSNDLSRGQGAAAA. Ser-174 is modified (phosphoserine). The segment covering 179–188 has biased composition (acidic residues); sequence FPNEEEEDSS. TPR repeat units lie at residues 211–244, 253–286, 295–328, 337–370, and 379–412; these read LRTL…LERT, ATML…REST, AATL…REKV, AKQL…YERQ, and ARTK…AHVQ. Phosphoserine is present on Ser-460. Residues 464 to 497 form a TPR 7 repeat; that stretch reads NTTLRNLGALYRRQGKLEAAETLEECALRSRKQG. Phosphoserine occurs at positions 565, 566, and 590. The interval 571-619 is disordered; that stretch reads RKLQGTEPRPSSSNMKRAASLNYLNQPNAAPLQTSRGLSASTVDLSSSS. Residues 592–608 show a composition bias toward polar residues; that stretch reads NYLNQPNAAPLQTSRGL. Positions 609–619 are enriched in low complexity; it reads SASTVDLSSSS. Thr-612 is modified (phosphothreonine).

The protein belongs to the kinesin light chain family. As to quaternary structure, oligomeric complex composed of two heavy chains and two light chains.

It localises to the cytoplasm. Its subcellular location is the cytoskeleton. Kinesin is a microtubule-associated force-producing protein that may play a role in organelle transport. The light chain may function in coupling of cargo to the heavy chain or in the modulation of its ATPase activity. This chain is Kinesin light chain 4 (Klc4), found in Rattus norvegicus (Rat).